Consider the following 341-residue polypeptide: Glyceraldehyde-3-phosphate dehydrogenase (341 aa).

Residues Thr-11–Ile-12 and Gly-109 each bind NAD(+). Ser-138 to Asn-140 serves as a coordination point for D-glyceraldehyde 3-phosphate. Catalysis depends on Cys-139, which acts as the Nucleophile. Arg-167 contributes to the NAD(+) binding site. Residues Thr-169 and His-192–Ala-193 contribute to the D-glyceraldehyde 3-phosphate site. Gln-299 contributes to the NAD(+) binding site.

The protein belongs to the glyceraldehyde-3-phosphate dehydrogenase family. As to quaternary structure, homotetramer.

It localises to the cytoplasm. It catalyses the reaction D-glyceraldehyde 3-phosphate + phosphate + NADP(+) = (2R)-3-phospho-glyceroyl phosphate + NADPH + H(+). The catalysed reaction is D-glyceraldehyde 3-phosphate + phosphate + NAD(+) = (2R)-3-phospho-glyceroyl phosphate + NADH + H(+). It functions in the pathway carbohydrate degradation; glycolysis; pyruvate from D-glyceraldehyde 3-phosphate: step 1/5. In Picrophilus torridus (strain ATCC 700027 / DSM 9790 / JCM 10055 / NBRC 100828 / KAW 2/3), this protein is Glyceraldehyde-3-phosphate dehydrogenase.